The sequence spans 307 residues: Cytochrome f (307 aa).

An N-terminal signal peptide occupies residues 1-24 (MKKNLFLVSVFASLFVGTANNALA). 4 residues coordinate heme: Tyr-25, Cys-45, Cys-48, and His-49. Residues 273–293 (LQGLVIFLGFVLIAQVFLVLK) form a helical membrane-spanning segment.

It belongs to the cytochrome f family. As to quaternary structure, the 4 large subunits of the cytochrome b6-f complex are cytochrome b6, subunit IV (17 kDa polypeptide, petD), cytochrome f and the Rieske protein, while the 4 small subunits are PetG, PetL, PetM and PetN. The complex functions as a dimer. It depends on heme as a cofactor.

It is found in the plastid. It localises to the chloroplast thylakoid membrane. Functionally, component of the cytochrome b6-f complex, which mediates electron transfer between photosystem II (PSII) and photosystem I (PSI), cyclic electron flow around PSI, and state transitions. The sequence is that of Cytochrome f from Ostreococcus tauri.